The chain runs to 289 residues: Enoyl-CoA delta isomerase 1, mitochondrial (289 aa).

Residues 1-28 (MALAAARRLLLHAGSRLGRREAVDGARR) constitute a mitochondrion transit peptide. Lys48 is subject to N6-acetyllysine; alternate. Lys48 is modified (N6-succinyllysine; alternate). Lys71 is modified (N6-succinyllysine). An N6-acetyllysine modification is found at Lys76. Substrate contacts are provided by residues 93 to 97 (AGLDL), Gly140, and Asn164. An N6-acetyllysine; alternate mark is found at Lys222, Lys229, Lys255, and Lys270. Lys222, Lys229, Lys255, and Lys270 each carry N6-succinyllysine; alternate. Lys275 bears the N6-succinyllysine mark. Lys283 is modified (N6-acetyllysine; alternate). Lys283 is subject to N6-succinyllysine; alternate.

It belongs to the enoyl-CoA hydratase/isomerase family. In terms of assembly, homotrimer.

The protein resides in the mitochondrion matrix. The enzyme catalyses a (3Z)-enoyl-CoA = a 4-saturated (2E)-enoyl-CoA. It carries out the reaction a (3E)-enoyl-CoA = a 4-saturated (2E)-enoyl-CoA. The catalysed reaction is (3Z)-octenoyl-CoA = (2E)-octenoyl-CoA. It catalyses the reaction (2E)-tetradecenoyl-CoA = (3Z)-tetradecenoyl-CoA. The enzyme catalyses (3Z)-dodecenoyl-CoA = (2E)-dodecenoyl-CoA. It carries out the reaction (3Z)-hexenoyl-CoA = (2E)-hexenoyl-CoA. The catalysed reaction is (3Z)-decenoyl-CoA = (2E)-decenoyl-CoA. It functions in the pathway lipid metabolism; fatty acid beta-oxidation. Functionally, key enzyme of fatty acid beta-oxidation. Able to isomerize both 3-cis (3Z) and 3-trans (3E) double bonds into the 2-trans (2E) form in a range of enoyl-CoA species, with a preference for (3Z)-enoyl-CoAs over (3E)-enoyl-CoAs. The catalytic efficiency of this enzyme is not affected by the fatty acyl chain length. The chain is Enoyl-CoA delta isomerase 1, mitochondrial from Mus musculus (Mouse).